The following is a 130-amino-acid chain: Small ribosomal subunit protein uS8 (130 aa).

It belongs to the universal ribosomal protein uS8 family.

The sequence is that of Small ribosomal subunit protein uS8 (rps22) from Agaricus bisporus (White button mushroom).